The sequence spans 172 residues: Cytidylate kinase (172 aa).

An ATP-binding site is contributed by 8–16 (GPPGSGKST).

Belongs to the cytidylate kinase family. Type 2 subfamily.

It localises to the cytoplasm. It carries out the reaction CMP + ATP = CDP + ADP. The catalysed reaction is dCMP + ATP = dCDP + ADP. In Ignicoccus hospitalis (strain KIN4/I / DSM 18386 / JCM 14125), this protein is Cytidylate kinase.